Consider the following 384-residue polypeptide: Spermidine/putrescine import ATP-binding protein PotA (384 aa).

The 233-residue stretch at 6 to 238 (ITFNNVSKTF…PINHFVANFI (233 aa)) folds into the ABC transporter domain. 40 to 47 (GASGSGKS) is an ATP binding site.

It belongs to the ABC transporter superfamily. Spermidine/putrescine importer (TC 3.A.1.11.1) family. The complex is composed of two ATP-binding proteins (PotA), two transmembrane proteins (PotB and PotC) and a solute-binding protein (PotD).

It localises to the cell membrane. The enzyme catalyses ATP + H2O + polyamine-[polyamine-binding protein]Side 1 = ADP + phosphate + polyamineSide 2 + [polyamine-binding protein]Side 1.. Its function is as follows. Part of the ABC transporter complex PotABCD involved in spermidine/putrescine import. Responsible for energy coupling to the transport system. In Streptococcus pyogenes serotype M6 (strain ATCC BAA-946 / MGAS10394), this protein is Spermidine/putrescine import ATP-binding protein PotA.